We begin with the raw amino-acid sequence, 375 residues long: Porin Omp2b (375 aa).

An N-terminal signal peptide occupies residues 1-22; it reads MNIKSLLLGSAAALVAASGAQA.

It belongs to the alphaproteobacteria porin family. Homotrimer.

It is found in the cell outer membrane. Functionally, forms passive diffusion pores that allow small molecular weight hydrophilic materials across the outer membrane. This is Porin Omp2b (omp2b) from Brucella suis.